The sequence spans 101 residues: Large ribosomal subunit protein uL23 (101 aa).

The protein belongs to the universal ribosomal protein uL23 family. Part of the 50S ribosomal subunit. Contacts protein L29, and trigger factor when it is bound to the ribosome.

Its function is as follows. One of the early assembly proteins it binds 23S rRNA. One of the proteins that surrounds the polypeptide exit tunnel on the outside of the ribosome. Forms the main docking site for trigger factor binding to the ribosome. The sequence is that of Large ribosomal subunit protein uL23 from Corynebacterium diphtheriae (strain ATCC 700971 / NCTC 13129 / Biotype gravis).